We begin with the raw amino-acid sequence, 119 residues long: uncharacterized protein (119 aa).

Helical transmembrane passes span 53–73 (AATILMAWLLLTICFIPSFLA) and 92–112 (FITHVYCLMIKPFVLYFWFLF).

Its subcellular location is the membrane. This is an uncharacterized protein from Saccharomyces cerevisiae (strain ATCC 204508 / S288c) (Baker's yeast).